The primary structure comprises 91 residues: Small ribosomal subunit protein uS17 (91 aa).

Belongs to the universal ribosomal protein uS17 family. Part of the 30S ribosomal subunit.

In terms of biological role, one of the primary rRNA binding proteins, it binds specifically to the 5'-end of 16S ribosomal RNA. The chain is Small ribosomal subunit protein uS17 from Salinispora tropica (strain ATCC BAA-916 / DSM 44818 / JCM 13857 / NBRC 105044 / CNB-440).